Consider the following 187-residue polypeptide: uncharacterized protein (187 aa).

An N-terminal signal peptide occupies residues 1–17; that stretch reads MYAGGRVVRSAFARGKV. Cys-18 is lipidated: N-palmitoyl cysteine. Cys-18 carries the S-diacylglycerol cysteine lipid modification.

It localises to the cell membrane. This is an uncharacterized protein from Treponema pallidum (strain Nichols).